The sequence spans 370 residues: Dual-specificity RNA methyltransferase RlmN (370 aa).

Catalysis depends on E93, which acts as the Proton acceptor. The Radical SAM core domain occupies 99–337 (EEGRGTLCVS…VTTVRKTRGD (239 aa)). The cysteines at positions 106 and 343 are disulfide-linked. [4Fe-4S] cluster contacts are provided by C113, C117, and C120. S-adenosyl-L-methionine contacts are provided by residues 167-168 (GE), S199, 221-223 (SLH), and N300. Residue C343 is the S-methylcysteine intermediate of the active site.

Belongs to the radical SAM superfamily. RlmN family. [4Fe-4S] cluster is required as a cofactor.

It is found in the cytoplasm. The catalysed reaction is adenosine(2503) in 23S rRNA + 2 reduced [2Fe-2S]-[ferredoxin] + 2 S-adenosyl-L-methionine = 2-methyladenosine(2503) in 23S rRNA + 5'-deoxyadenosine + L-methionine + 2 oxidized [2Fe-2S]-[ferredoxin] + S-adenosyl-L-homocysteine. It carries out the reaction adenosine(37) in tRNA + 2 reduced [2Fe-2S]-[ferredoxin] + 2 S-adenosyl-L-methionine = 2-methyladenosine(37) in tRNA + 5'-deoxyadenosine + L-methionine + 2 oxidized [2Fe-2S]-[ferredoxin] + S-adenosyl-L-homocysteine. Specifically methylates position 2 of adenine 2503 in 23S rRNA and position 2 of adenine 37 in tRNAs. m2A2503 modification seems to play a crucial role in the proofreading step occurring at the peptidyl transferase center and thus would serve to optimize ribosomal fidelity. This is Dual-specificity RNA methyltransferase RlmN from Francisella tularensis subsp. novicida (strain U112).